The chain runs to 147 residues: Phospholipase A2 inhibitor subunit B (147 aa).

Positions 62-143 (EICEEAGGHI…DEKLLVVCEF (82 aa)) constitute a C-type lectin domain. 2 disulfides stabilise this stretch: cysteine 64-cysteine 141 and cysteine 119-cysteine 133. Asparagine 103 is a glycosylation site (N-linked (GlcNAc...) asparagine).

Belongs to the alpha-type phospholipase A2 inhibitor family. As to quaternary structure, homo- or heterotrimer; homotrimer of PLI-A chains, two PLI-A and one PLI-B chains, one PLI-A and two PLI-B chains, and homotrimer of PLI-B chains (with a ratio of 1:3:3:1). Expressed by the liver.

It localises to the secreted. Its function is as follows. PLI binds directly phospholipase A2 in the presence or absence of calcium. Inhibitory activity of the PLI-B homotrimer is less specific than that of the PLI-A homotrimer. The polypeptide is Phospholipase A2 inhibitor subunit B (Protobothrops flavoviridis (Habu)).